Reading from the N-terminus, the 115-residue chain is MGVEISLDPPVCPIQANGGVSKHKMINHTDRHMAYKVKSSNNSNYSVNLIYGILKVCDVKELVITRKPGKPQADKLIIQYCMVVDENTDPKPLFANGVPPGELSGETVIKLSAAE.

In terms of domain architecture, MSP spans 1–115; it reads MGVEISLDPP…ETVIKLSAAE (115 aa).

This is an uncharacterized protein from Caenorhabditis elegans.